The sequence spans 100 residues: Large ribosomal subunit protein uL23 (100 aa).

This sequence belongs to the universal ribosomal protein uL23 family. In terms of assembly, part of the 50S ribosomal subunit. Contacts protein L29, and trigger factor when it is bound to the ribosome.

In terms of biological role, one of the early assembly proteins it binds 23S rRNA. One of the proteins that surrounds the polypeptide exit tunnel on the outside of the ribosome. Forms the main docking site for trigger factor binding to the ribosome. This Aliivibrio fischeri (strain MJ11) (Vibrio fischeri) protein is Large ribosomal subunit protein uL23.